Reading from the N-terminus, the 100-residue chain is Small ribosomal subunit protein uS17 (100 aa).

Belongs to the universal ribosomal protein uS17 family. In terms of assembly, part of the 30S ribosomal subunit.

One of the primary rRNA binding proteins, it binds specifically to the 5'-end of 16S ribosomal RNA. This chain is Small ribosomal subunit protein uS17, found in Fervidobacterium nodosum (strain ATCC 35602 / DSM 5306 / Rt17-B1).